The following is a 132-amino-acid chain: Small ribosomal subunit protein uS11 (132 aa).

The protein belongs to the universal ribosomal protein uS11 family. In terms of assembly, part of the 30S ribosomal subunit. Interacts with proteins S7 and S18. Binds to IF-3.

In terms of biological role, located on the platform of the 30S subunit, it bridges several disparate RNA helices of the 16S rRNA. Forms part of the Shine-Dalgarno cleft in the 70S ribosome. The polypeptide is Small ribosomal subunit protein uS11 (Clostridium kluyveri (strain NBRC 12016)).